Here is a 538-residue protein sequence, read N- to C-terminus: AAA ATPase forming ring-shaped complexes (538 aa).

Positions Ala14–Glu54 form a coiled coil. Gly240–Leu245 lines the ATP pocket.

It belongs to the AAA ATPase family. As to quaternary structure, homohexamer. Assembles into a hexameric ring structure.

The polypeptide is AAA ATPase forming ring-shaped complexes (Corynebacterium urealyticum (strain ATCC 43042 / DSM 7109)).